Here is a 287-residue protein sequence, read N- to C-terminus: Nucleoside kinase (287 aa).

Residues Asp-13, Asn-28, Gly-38, and Asn-42 each coordinate substrate. Gln-102 serves as a coordination point for ATP. Substrate contacts are provided by Ser-104 and Gln-150. Residues Asn-173 and 196 to 201 (TNGERG) contribute to the ATP site. Asp-227 contacts substrate. The Proton acceptor role is filled by Asp-227.

Belongs to the carbohydrate kinase PfkB family. As to quaternary structure, homodimer. Mg(2+) serves as cofactor. The cofactor is Co(2+).

It carries out the reaction adenosine + ATP = AMP + ADP + H(+). The catalysed reaction is cytidine + ATP = CMP + ADP + H(+). The enzyme catalyses guanosine + ATP = GMP + ADP + H(+). It catalyses the reaction inosine + ATP = IMP + ADP + H(+). In terms of biological role, nucleoside kinase with broad substrate specificity. Catalyzes the phosphorylation of a variety of nucleosides to the corresponding nucleoside 5'-mono-phosphate in the presence of phosphate donors and divalent cations. Displays the most efficient activity with guanosine, followed by inosine, cytidine, and adenosine. Negligible enzymatic activity is detected with thymidine, uridine, and 2-deoxyadenosine. ATP is the most efficient phosphate donor, but can also use GTP and ITP. Shows no sugar kinase activity, since it is unable to phosphorylate ribose, fructose-1-phosphate, or fructose-6-phosphate. This chain is Nucleoside kinase, found in Thermoplasma acidophilum (strain ATCC 25905 / DSM 1728 / JCM 9062 / NBRC 15155 / AMRC-C165).